Reading from the N-terminus, the 299-residue chain is GTPase Era (299 aa).

In terms of domain architecture, Era-type G spans Lys4–Glu171. Residues Gly12–Ser19 form a G1 region. Gly12 to Ser19 contacts GTP. A G2 region spans residues Gln38–Asn42. Positions Asp59–Gly62 are G3. Residues Asp59–Ile63 and Asn121–Asp124 contribute to the GTP site. Residues Asn121 to Asp124 are G4. A G5 region spans residues Ile150 to Ala152. A KH type-2 domain is found at Thr202 to Lys280.

This sequence belongs to the TRAFAC class TrmE-Era-EngA-EngB-Septin-like GTPase superfamily. Era GTPase family. In terms of assembly, monomer.

It is found in the cytoplasm. The protein resides in the cell membrane. Functionally, an essential GTPase that binds both GDP and GTP, with rapid nucleotide exchange. Plays a role in 16S rRNA processing and 30S ribosomal subunit biogenesis and possibly also in cell cycle regulation and energy metabolism. The chain is GTPase Era from Streptococcus suis (strain 98HAH33).